Reading from the N-terminus, the 277-residue chain is Large ribosomal subunit protein uL2 (277 aa).

Residues 212–277 (RWRGKRPHVR…KFIVRGRKSK (66 aa)) form a disordered region. Basic residues predominate over residues 254–277 (TAGKKTRDKKKASTKFIVRGRKSK).

This sequence belongs to the universal ribosomal protein uL2 family. As to quaternary structure, part of the 50S ribosomal subunit. Forms a bridge to the 30S subunit in the 70S ribosome.

Its function is as follows. One of the primary rRNA binding proteins. Required for association of the 30S and 50S subunits to form the 70S ribosome, for tRNA binding and peptide bond formation. It has been suggested to have peptidyltransferase activity; this is somewhat controversial. Makes several contacts with the 16S rRNA in the 70S ribosome. The polypeptide is Large ribosomal subunit protein uL2 (Leuconostoc citreum (strain KM20)).